Reading from the N-terminus, the 603-residue chain is DNA mismatch repair protein MutL (603 aa).

The span at 336 to 346 (EVSKKQKEQQK) shows a compositional bias: basic and acidic residues. The segment at 336–372 (EVSKKQKEQQKSEQIQMSFEENRQPKEPPTLFSKPNI) is disordered.

It belongs to the DNA mismatch repair MutL/HexB family.

In terms of biological role, this protein is involved in the repair of mismatches in DNA. It is required for dam-dependent methyl-directed DNA mismatch repair. May act as a 'molecular matchmaker', a protein that promotes the formation of a stable complex between two or more DNA-binding proteins in an ATP-dependent manner without itself being part of a final effector complex. The sequence is that of DNA mismatch repair protein MutL from Listeria innocua serovar 6a (strain ATCC BAA-680 / CLIP 11262).